Reading from the N-terminus, the 347-residue chain is Quinolinate synthase (347 aa).

Iminosuccinate contacts are provided by H47 and S68. C113 is a [4Fe-4S] cluster binding site. Iminosuccinate is bound by residues 139–141 (YAN) and S156. C200 lines the [4Fe-4S] cluster pocket. Iminosuccinate is bound by residues 226–228 (HPE) and T243. C297 contacts [4Fe-4S] cluster.

It belongs to the quinolinate synthase family. Type 1 subfamily. It depends on [4Fe-4S] cluster as a cofactor.

The protein resides in the cytoplasm. It catalyses the reaction iminosuccinate + dihydroxyacetone phosphate = quinolinate + phosphate + 2 H2O + H(+). The protein operates within cofactor biosynthesis; NAD(+) biosynthesis; quinolinate from iminoaspartate: step 1/1. Catalyzes the condensation of iminoaspartate with dihydroxyacetone phosphate to form quinolinate. This is Quinolinate synthase from Shigella dysenteriae serotype 1 (strain Sd197).